The following is a 508-amino-acid chain: GMP synthase [glutamine-hydrolyzing] (508 aa).

A Glutamine amidotransferase type-1 domain is found at 1 to 189 (MILVLDFGSQ…ALLVCGCEKT (189 aa)). The Nucleophile role is filled by C78. Active-site residues include H163 and E165. The GMPS ATP-PPase domain maps to 190-383 (WGMQHFAQRE…LGVSQDFLMR (194 aa)). 217–223 (SGGVDST) provides a ligand contact to ATP.

In terms of assembly, homodimer.

The catalysed reaction is XMP + L-glutamine + ATP + H2O = GMP + L-glutamate + AMP + diphosphate + 2 H(+). The protein operates within purine metabolism; GMP biosynthesis; GMP from XMP (L-Gln route): step 1/1. In terms of biological role, catalyzes the synthesis of GMP from XMP. This Helicobacter pylori (strain J99 / ATCC 700824) (Campylobacter pylori J99) protein is GMP synthase [glutamine-hydrolyzing] (guaA).